The sequence spans 331 residues: Serine racemase (331 aa).

Residues Ser-34 and Lys-54 each coordinate ATP. Catalysis depends on Lys-59, which acts as the Proton acceptor. Lys-59 bears the N6-(pyridoxal phosphate)lysine mark. Residue Thr-81 participates in Ca(2+) binding. Ser-84 (proton acceptor) is an active-site residue. Pyridoxal 5'-phosphate is bound at residue Asn-86. An ATP-binding site is contributed by Tyr-121. Residue Asp-178 coordinates Mg(2+). Positions 186, 187, and 188 each coordinate pyridoxal 5'-phosphate. Residues Glu-210, Ala-214, and Asp-216 each coordinate Ca(2+). Mg(2+) is bound by residues Glu-210, Ala-214, and Asp-216. Residues Glu-210, Ala-214, and Asp-216 each contribute to the Mn(2+) site. Residue Lys-278 coordinates ATP. Residue Ser-314 participates in pyridoxal 5'-phosphate binding. Asn-317 contacts ATP.

The protein belongs to the serine/threonine dehydratase family. Homodimer. Requires Mg(2+) as cofactor. Mn(2+) is required as a cofactor. It depends on Ca(2+) as a cofactor. The cofactor is pyridoxal 5'-phosphate. As to expression, expressed in the whole plant.

It carries out the reaction L-serine = D-serine. The catalysed reaction is L-serine = pyruvate + NH4(+). It catalyses the reaction D-serine = pyruvate + NH4(+). Inhibited by hydroxylamine. Racemase activity is enhanced by Ca(2+), Mg(2+), Mn(2+), and is decreased by Ni(2+), Zn(2+). Hydratase activity is enhanced by Ca(2+), Mg(2+), Mn(2+), Cu(2+), Fe(2+), Ni(2+). Catalyzes the synthesis of D-serine from L-serine. Has dehydratase activity towards both L-serine and D-serine. Displays high substrate specificity for L-serine, whereas L-alanine, L-arginine, and L-glutamine were poor substrates. This chain is Serine racemase (SR), found in Arabidopsis thaliana (Mouse-ear cress).